Reading from the N-terminus, the 484-residue chain is Serine protease HTR4 (484 aa).

Positions 1–28 (MARPLQRPAGLGPFVLLWLLLPAPSGRG) are cleaved as a signal peptide. The IGFBP N-terminal domain occupies 36–114 (PVPRCPAACE…GRPLGTCGCP (79 aa)). Disulfide bonds link Cys-40–Cys-66, Cys-44–Cys-68, Cys-49–Cys-69, Cys-55–Cys-72, Cys-80–Cys-94, Cys-88–Cys-111, Cys-113–Cys-132, and Cys-121–Cys-157. The Kazal-like domain occupies 105-159 (GRPLGTCGCPAAGATVCGSDGRTYRSLCALRAENRAARLRGALPAVPVQKGDCGD). Residues 209–369 (ASGFIVSEDG…IPSDRIRQFL (161 aa)) form a serine protease region. Residues His-225, Asp-255, and Ser-333 each act as charge relay system in the active site. Positions 390-472 (LRMLPLTMNL…LSLLVRRKSQ (83 aa)) constitute a PDZ domain.

The protein belongs to the peptidase S1C family.

It is found in the secreted. Serine protease. This Bos taurus (Bovine) protein is Serine protease HTR4 (HTRA4).